We begin with the raw amino-acid sequence, 295 residues long: Protease HtpX (295 aa).

Helical transmembrane passes span 4–24 and 42–62; these read IFLF…VLRL and ALLI…LAIS. Histidine 147 contacts Zn(2+). The active site involves glutamate 148. Histidine 151 serves as a coordination point for Zn(2+). 2 helical membrane-spanning segments follow: residues 155-175 and 197-217; these read GDMV…IFLA and FWIT…IIVM. Residue glutamate 224 participates in Zn(2+) binding.

It belongs to the peptidase M48B family. The cofactor is Zn(2+).

The protein localises to the cell inner membrane. The chain is Protease HtpX from Thioalkalivibrio sulfidiphilus (strain HL-EbGR7).